Here is a 367-residue protein sequence, read N- to C-terminus: Centromere protein L (367 aa).

It belongs to the CENP-L/IML3 family.

Its subcellular location is the nucleus. The protein localises to the chromosome. The protein resides in the centromere. Functionally, probable component of a centromeric complex involved in assembly of kinetochore proteins, mitotic progression and chromosome segregation. This chain is Centromere protein L (cenpl), found in Danio rerio (Zebrafish).